The primary structure comprises 499 residues: Glucose-6-phosphate exchanger SLC37A2 (499 aa).

Residues 21–40 (YRGFIIVMTFLFYTCYHMSR) form a helical membrane-spanning segment. N-linked (GlcNAc...) asparagine glycosylation is found at Asn-53, Asn-62, and Asn-66. 11 consecutive transmembrane segments (helical) span residues 86-106 (GSLD…SGIF), 116-136 (LSGG…GYYW), 138-158 (IHAL…QTTG), 187-207 (AVGN…AWGL), 208-228 (SFIV…FFLV), 302-322 (LCLL…PLYI), 334-354 (GDLS…AGGI), 362-382 (AITC…YNYL), 391-411 (VAML…ITTA), 434-454 (AIID…AGVL), and 458-478 (GWNY…LLLV).

Belongs to the major facilitator superfamily. Organophosphate:Pi antiporter (OPA) (TC 2.A.1.4) family.

It localises to the endoplasmic reticulum membrane. The enzyme catalyses D-glucose 6-phosphate(in) + phosphate(out) = D-glucose 6-phosphate(out) + phosphate(in). Functionally, inorganic phosphate and glucose-6-phosphate antiporter. May transport cytoplasmic glucose-6-phosphate into the lumen of the endoplasmic reticulum and translocate inorganic phosphate into the opposite direction. The chain is Glucose-6-phosphate exchanger SLC37A2 from Xenopus tropicalis (Western clawed frog).